We begin with the raw amino-acid sequence, 443 residues long: Xaa-Pro dipeptidase (443 aa).

Residues aspartate 244, aspartate 255, histidine 336, glutamate 381, and glutamate 420 each contribute to the Mn(2+) site.

Belongs to the peptidase M24B family. Bacterial-type prolidase subfamily. The cofactor is Mn(2+).

It catalyses the reaction Xaa-L-Pro dipeptide + H2O = an L-alpha-amino acid + L-proline. In terms of biological role, splits dipeptides with a prolyl residue in the C-terminal position. In Stenotrophomonas maltophilia (strain R551-3), this protein is Xaa-Pro dipeptidase.